The following is a 294-amino-acid chain: Probable 2-(5''-triphosphoribosyl)-3'-dephosphocoenzyme-A synthase (294 aa).

This sequence belongs to the CitG/MdcB family.

It catalyses the reaction 3'-dephospho-CoA + ATP = 2'-(5''-triphospho-alpha-D-ribosyl)-3'-dephospho-CoA + adenine. The sequence is that of Probable 2-(5''-triphosphoribosyl)-3'-dephosphocoenzyme-A synthase from Streptococcus pyogenes serotype M49 (strain NZ131).